A 5218-amino-acid polypeptide reads, in one-letter code: HC-toxin synthetase (5218 aa).

The adenylation 1 stretch occupies residues 223–620; it reads SARAHEQDAN…VGRSDTQIKL (398 aa). A Carrier 1 domain is found at 769-843; sequence MNDDSLLLTA…TAASCIKSAQ (75 aa). Ser803 carries the O-(pantetheine 4'-phosphoryl)serine modification. A condensation 1 region spans residues 858–1154; it reads IPVSPIQKLF…GWFTTISPVY (297 aa). Positions 1338-1806 are epimerization; that stretch reads EGVYPGSPMQ…LPIVSEHDTA (469 aa). The interval 1828-2233 is adenylation 2; that stretch reads SRKVVEHPQR…IGRKDTQVKM (406 aa). Residues 2379 to 2453 enclose the Carrier 2 domain; the sequence is ETTDTVEDRL…DMAKLFSHGQ (75 aa). The residue at position 2414 (Ser2414) is an O-(pantetheine 4'-phosphoryl)serine. A condensation 2 region spans residues 2531–2929; that stretch reads EDVFPCTPMQ…MEQFGHNLQT (399 aa). The adenylation 3 stretch occupies residues 2979-3386; the sequence is LEETAQSQPA…GRKDGQIKLR (408 aa). Residues 3532–3608 form the Carrier 3 domain; that stretch reads QVLTTNESVL…DMAGQISFVQ (77 aa). O-(pantetheine 4'-phosphoryl)serine is present on Ser3569. The segment at 3649 to 4102 is condensation 3; the sequence is EDVYPCTPLQ…PALSEAHLAE (454 aa). The interval 4134 to 4530 is adenylation 4; sequence RRAQQSPNSQ…NLYYVRRKDS (397 aa). Residues 4666 to 4740 form the Carrier 4 domain; the sequence is THTQKLLRQL…AMSSLIDEHN (75 aa). Position 4701 is an O-(pantetheine 4'-phosphoryl)serine (Ser4701). Residues 4785-5101 form a condensation 4 region; it reads TLPCTEYQQM…SAIREFIPQA (317 aa).

It belongs to the NRP synthetase family. Pantetheine 4'-phosphate serves as cofactor.

The protein operates within mycotoxin biosynthesis; HC-toxin biosynthesis. Non-ribosomal peptide synthetase, part of the diffuse TOX2 gene cluster that mediates the biosynthesis of the HC-toxin, cyclic tetrapeptide of structure cyclo(D-Pro-L-Ala-D-Ala-L-Aeo), where Aeo stands for 2-amino-9,10-epoxi-8-oxodecanoic acid. HC-toxin is a determinant of specificity and virulence in the interaction between the producing fungus and its host, maize. HTS1, contains four modules, one for each amino acid in HC-toxin, with the order of activation being most likely Pro, Ala, Ala, and Aeo. In addition, HTS1 has one epimerase domain between modules 1 and 2, which is responsible for epimerizing L-Pro to D-Pro. The absence of an epimerizing domain after module 3, for producing D-Ala, can be explained by the presence in the cluster of TOXG, an Ala racemase, which produces D-Ala for incorporation by HTS1 into HC-toxin. The protein is HC-toxin synthetase of Cochliobolus carbonum (Maize leaf spot fungus).